Consider the following 290-residue polypeptide: Alpha-mannosidase (290 aa).

The Nucleophile role is filled by Asp-17. N-linked (GlcNAc...) asparagine glycosylation occurs at Asn-64.

The protein belongs to the glycosyl hydrolase 38 family. As to quaternary structure, dimer. Requires Zn(2+) as cofactor.

The enzyme catalyses Hydrolysis of terminal, non-reducing alpha-D-mannose residues in alpha-D-mannosides.. With respect to regulation, inhibited by swainsonine but not by 1-desoxymannojirimycin. Its function is as follows. Liberates mannose from p-nitrophenyl-alpha-D-mannoside. In Lablab purpureus (Hyacinth bean), this protein is Alpha-mannosidase.